Here is a 336-residue protein sequence, read N- to C-terminus: Formimidoylglutamase (336 aa).

Polar residues predominate over residues 1–10; the sequence is MNPNFTTEHT. Residues 1 to 22 form a disordered region; it reads MNPNFTTEHTWQGRHDPEDGQA. Residues 11–22 are compositionally biased toward basic and acidic residues; it reads WQGRHDPEDGQA. Residues His-127, Asp-157, His-159, Asp-161, Asp-254, and Asp-256 each contribute to the Mn(2+) site.

It belongs to the arginase family. Mn(2+) is required as a cofactor.

The enzyme catalyses N-formimidoyl-L-glutamate + H2O = formamide + L-glutamate. It participates in amino-acid degradation; L-histidine degradation into L-glutamate; L-glutamate from N-formimidoyl-L-glutamate (hydrolase route): step 1/1. In terms of biological role, catalyzes the conversion of N-formimidoyl-L-glutamate to L-glutamate and formamide. The polypeptide is Formimidoylglutamase (Vibrio cholerae serotype O1 (strain ATCC 39541 / Classical Ogawa 395 / O395)).